A 147-amino-acid chain; its full sequence is Hemoglobin subunit deltaH (147 aa).

Residues Arg3–His147 form the Globin domain. Positions 64 and 93 each coordinate heme b.

This sequence belongs to the globin family. Heterotetramer of two delta chains and two alpha chains. Red blood cells.

This Dendrohyrax dorsalis (Beecroft's tree hyrax) protein is Hemoglobin subunit deltaH (HBD).